The sequence spans 291 residues: Probable prolyl 4-hydroxylase 12 (291 aa).

Over 1 to 156 (MACLSRIFLI…GEEPSSVLHE (156 aa)) the chain is Cytoplasmic. Residues 125–239 (NGGSIKVRSY…LLVATKLIYA (115 aa)) form the Fe2OG dioxygenase domain. The Fe cation site is built by Lys-142 and Asp-144. The chain crosses the membrane as a helical; Signal-anchor for type II membrane protein span at residues 157 to 173 (SLLATVVLYLSNTTQGG). Residues 174-291 (ELLFPNSEMK…GTCRKSCNAC (118 aa)) lie on the Lumenal side of the membrane. Asn-211 is a glycosylation site (N-linked (GlcNAc...) asparagine). Fe cation is bound at residue His-220. Positions 251-291 (CSDEDENCGRWAKLGECKKNPVYMIGSPDYYGTCRKSCNAC) constitute a ShKT domain. 3 disulfide bridges follow: Cys-251/Cys-291, Cys-258/Cys-284, and Cys-267/Cys-288.

The protein belongs to the P4HA family. Fe(2+) is required as a cofactor. It depends on L-ascorbate as a cofactor.

The protein localises to the endoplasmic reticulum membrane. It carries out the reaction L-prolyl-[collagen] + 2-oxoglutarate + O2 = trans-4-hydroxy-L-prolyl-[collagen] + succinate + CO2. Functionally, catalyzes the post-translational formation of 4-hydroxyproline in -Xaa-Pro-Gly- sequences in proline-rich peptide sequences of plant glycoproteins and other proteins. Hydroxyprolines are important constituent of many plant cell wall glycoproteins such as extensins, hydroxyproline-rich glycoproteins, lectins and arabinogalactan proteins. This is Probable prolyl 4-hydroxylase 12 from Arabidopsis thaliana (Mouse-ear cress).